Consider the following 68-residue polypeptide: Inhibitor of trypsin and hageman factor (68 aa).

At serine 1 the chain carries N-acetylserine. An intrachain disulfide couples cysteine 3 to cysteine 48.

The protein belongs to the protease inhibitor I13 (potato type I serine protease inhibitor) family.

Specifically inhibits both trypsin and activated Hageman factor. This Cucurbita maxima (Pumpkin) protein is Inhibitor of trypsin and hageman factor.